We begin with the raw amino-acid sequence, 530 residues long: Ataxin-10 homolog (530 aa).

This sequence belongs to the ataxin-10 family.

The protein localises to the cytoplasm. In terms of biological role, may play a role in the regulation of cytokinesis. The sequence is that of Ataxin-10 homolog (CTR86) from Candida glabrata (strain ATCC 2001 / BCRC 20586 / JCM 3761 / NBRC 0622 / NRRL Y-65 / CBS 138) (Yeast).